Here is a 91-residue protein sequence, read N- to C-terminus: MSNSFTLLFSSFIGFLQIYLILLLIRVSLTWFPNVNWYGQPFYSLSRITDPYLKMFRGIVPPLIGIDISPILGFILLQCIMQIVSNIGLSS.

The protein belongs to the ycf19 family.

The protein localises to the plastid. It is found in the chloroplast. This is an uncharacterized protein from Guillardia theta (Cryptophyte).